Consider the following 177-residue polypeptide: R-phycoerythrin beta chain (177 aa).

Phycourobilin contacts are provided by C50 and C61. Residue N72 is modified to N4-methylasparagine. (2R,3E)-phycoerythrobilin is bound by residues C82 and C158.

Belongs to the phycobiliprotein family. As to quaternary structure, heterodimer of an alpha and a beta chain. In terms of processing, contains two covalently linked phycoerythrobilin chromophores and one covalently linked phycourobilin chromophore.

It localises to the plastid. It is found in the chloroplast thylakoid membrane. Its function is as follows. Light-harvesting photosynthetic bile pigment-protein from the phycobiliprotein complex. The protein is R-phycoerythrin beta chain (cpeB) of Lophosiphonia boldii (Red alga).